The primary structure comprises 62 residues: Beta-defensin 10 (62 aa).

A signal peptide spans 1 to 22 (MRLHHLLLLLLLVVLSSGSGFT). The residue at position 23 (Gln23) is a Pyrrolidone carboxylic acid. 3 cysteine pairs are disulfide-bonded: Cys31–Cys60, Cys38–Cys53, and Cys43–Cys61.

Belongs to the beta-defensin family. In terms of tissue distribution, neutrophilic granules.

The protein resides in the secreted. In terms of biological role, has bactericidal activity. Active against E.coli ML35 and S.aureus 502A. The polypeptide is Beta-defensin 10 (DEFB10) (Bos taurus (Bovine)).